The sequence spans 427 residues: Serine hydroxymethyltransferase (427 aa).

120–122 lines the (6S)-5,6,7,8-tetrahydrofolate pocket; it reads GHI. At K226 the chain carries N6-(pyridoxal phosphate)lysine.

This sequence belongs to the SHMT family. In terms of assembly, homodimer. It depends on pyridoxal 5'-phosphate as a cofactor.

The protein resides in the cytoplasm. Its pathway is amino-acid biosynthesis; glycine biosynthesis; glycine from L-serine: step 1/1. Catalyzes the reversible interconversion of serine and glycine with a modified folate serving as the one-carbon carrier. Also exhibits a pteridine-independent aldolase activity toward beta-hydroxyamino acids, producing glycine and aldehydes, via a retro-aldol mechanism. This chain is Serine hydroxymethyltransferase, found in Pyrococcus abyssi (strain GE5 / Orsay).